The sequence spans 180 residues: Hypoxanthine-guanine phosphoribosyltransferase (180 aa).

GMP is bound by residues Lys40, 99 to 107 (EDIVDSGLT), Lys131, and Asp159. Residue Asp103 is the Proton acceptor of the active site. Asp159 is a binding site for Mg(2+).

The protein belongs to the purine/pyrimidine phosphoribosyltransferase family. Requires Mg(2+) as cofactor.

Its subcellular location is the cytoplasm. It carries out the reaction IMP + diphosphate = hypoxanthine + 5-phospho-alpha-D-ribose 1-diphosphate. The enzyme catalyses GMP + diphosphate = guanine + 5-phospho-alpha-D-ribose 1-diphosphate. The protein operates within purine metabolism; IMP biosynthesis via salvage pathway; IMP from hypoxanthine: step 1/1. Functionally, converts guanine to guanosine monophosphate, and hypoxanthine to inosine monophosphate. Transfers the 5-phosphoribosyl group from 5-phosphoribosylpyrophosphate onto the purine. Plays a central role in the generation of purine nucleotides through the purine salvage pathway. The protein is Hypoxanthine-guanine phosphoribosyltransferase (hprT) of Dictyostelium discoideum (Social amoeba).